Consider the following 144-residue polypeptide: uncharacterized protein (144 aa).

The 108-residue stretch at 4–111 (VFCAIIAGEA…LPPRNGDKLS (108 aa)) folds into the HIT domain. Residues 96-100 (HVHLH) carry the Histidine triad motif motif.

This is an uncharacterized protein from Mycobacterium tuberculosis (strain CDC 1551 / Oshkosh).